A 332-amino-acid polypeptide reads, in one-letter code: Glyceraldehyde-3-phosphate dehydrogenase 2 (332 aa).

3 residues coordinate NAD(+): Arg-11, Ile-12, and Asp-33. Residues Lys-46 and Lys-63 each participate in a glycyl lysine isopeptide (Lys-Gly) (interchain with G-Cter in ubiquitin) cross-link. Thr-120 is a binding site for NAD(+). Residues 149 to 151 (SCT), Thr-180, 209 to 210 (TG), and Arg-232 contribute to the D-glyceraldehyde 3-phosphate site. The active-site Nucleophile is Cys-150. A Phosphoserine modification is found at Ser-302. 2 residues coordinate NAD(+): Asn-314 and Tyr-318.

It belongs to the glyceraldehyde-3-phosphate dehydrogenase family. As to quaternary structure, homotetramer.

Its subcellular location is the cytoplasm. It carries out the reaction D-glyceraldehyde 3-phosphate + phosphate + NAD(+) = (2R)-3-phospho-glyceroyl phosphate + NADH + H(+). It catalyses the reaction NADH + H2O = (6R)-NADHX. The catalysed reaction is NADH + H2O = (6S)-NADHX. The enzyme catalyses NADPH + H2O = (6R)-NADPHX. It carries out the reaction NADPH + H2O = (6S)-NADPHX. It functions in the pathway carbohydrate degradation; glycolysis; pyruvate from D-glyceraldehyde 3-phosphate: step 1/5. Glyceraldehyde-3-phosphate dehydrogenase (GAPDH) involved in glycolysis and gluconeogenesis. Catalyzes the reaction of glyceraldehyde-3-phosphate to 1,3 bis-phosphoglycerate. The contribution of the TDH1, TDH2, and TDH3 to the total glyceraldehyde-3-phosphate dehydrogenase activity is 10-15, 25-30, and 50-60%, respectively. Its function is as follows. As a side activity, catalyzes the hydration of the nicotinamide ring of NADH or NADPH at the C6 position to give the corresponding hydrates, NADHX and NADPHX, which exist as R and S epimers, that cannot act as electron donors or acceptors and inhibit several dehydrogenases, making them toxic. The polypeptide is Glyceraldehyde-3-phosphate dehydrogenase 2 (Saccharomyces cerevisiae (strain ATCC 204508 / S288c) (Baker's yeast)).